A 746-amino-acid chain; its full sequence is F-box only protein 30 (746 aa).

Residues 49 to 110 form a TRAF-type zinc finger; that stretch reads EHRLLCPFER…SYSDRKSYES (62 aa). Disordered regions lie at residues 222–241 and 247–266; these read MDEENNKESFQDKNLKDQDH and IGAVGGVDYSGTSQNAQAEQ. Residues 225–241 are compositionally biased toward basic and acidic residues; that stretch reads ENNKESFQDKNLKDQDH. Residues 256 to 266 are compositionally biased toward polar residues; the sequence is SGTSQNAQAEQ. Phosphoserine is present on Ser-383. The F-box domain maps to 611-659; the sequence is SDHLSSLPFEVLQHIAGFLDGFSLCQLACVSRLMRDVCGSLLQSRGMVI.

In terms of assembly, part of a SCF (SKP1-cullin-F-box) protein ligase complex. Interacts with SKP1, CUL1 and RBX1/ROC1. Post-translationally, auto-ubiquitinated. In terms of processing, may be neddylated. Neddylation may be required for E3 ligase activity, since it was observed only after purification with o-phenanthroline.

It functions in the pathway protein modification; protein ubiquitination. Functionally, substrate-recognition component of the SCF (SKP1-CUL1-F-box protein)-type E3 ubiquitin ligase complex. Required for muscle atrophy following denervation. This Mus musculus (Mouse) protein is F-box only protein 30 (Fbxo30).